A 377-amino-acid polypeptide reads, in one-letter code: Protein RecA (377 aa).

ATP is bound at residue 82 to 89; that stretch reads GPESSGKT. The disordered stretch occupies residues 345-377; that stretch reads EGSEVSANSMRPLASAARQASSRPNLSQVSANG. The span at 362-377 shows a compositional bias: polar residues; sequence RQASSRPNLSQVSANG.

It belongs to the RecA family.

It is found in the cytoplasm. Functionally, can catalyze the hydrolysis of ATP in the presence of single-stranded DNA, the ATP-dependent uptake of single-stranded DNA by duplex DNA, and the ATP-dependent hybridization of homologous single-stranded DNAs. It interacts with LexA causing its activation and leading to its autocatalytic cleavage. The protein is Protein RecA of Prochlorococcus marinus (strain NATL2A).